The following is a 243-amino-acid chain: R-spondin-2 (243 aa).

The first 21 residues, 1 to 21 (MQFQLFSFALIILNCVDYSHC), serve as a signal peptide directing secretion. 11 disulfides stabilise this stretch: Cys40-Cys46, Cys43-Cys52, Cys55-Cys74, Cys78-Cys93, Cys96-Cys104, Cys101-Cys110, Cys113-Cys124, Cys128-Cys141, Cys145-Cys187, Cys156-Cys163, and Cys196-Cys203. The stretch at 90 to 134 (MNRCSRCRIENCDSCFSRDFCIKCKSGFYSLKGQCFEECPEGFAP) is one FU repeat. The TSP type-1 domain maps to 144–204 (GCEVGPWSEW…RCKMAIRHCP (61 aa)). N-linked (GlcNAc...) asparagine glycosylation is present at Asn160. Basic residues predominate over residues 204–224 (PGGKRTTKKKDKRNKKKKKKL). Residues 204–243 (PGGKRTTKKKDKRNKKKKKKLLERAQEQHSVVLATDRSSQ) are disordered.

Belongs to the R-spondin family. As to quaternary structure, binds heparin.

The protein resides in the secreted. Functionally, activator of the canonical Wnt signaling pathway by acting as a ligand for lgr4-6 receptors. Upon binding to lgr4-6 (lgr4, lgr5 or lgr6), lgr4-6 associate with phosphorylated lrp6 and frizzled receptors that are activated by extracellular Wnt receptors, triggering the canonical Wnt signaling pathway to increase expression of target genes. Acts both in the canonical Wnt/beta-catenin-dependent pathway and in non-canonical Wnt signaling pathway. Activates neural markers and promotes muscle formation. Overexpression blocks activin, nodal and BMP4 signaling, suggesting that it may negatively regulate the TGF-beta pathway. During embryonic development, plays a crucial role in limb specification, amplifying the Wnt signaling pathway independently of LGR4-6 receptors, possibly by acting as a direct antagonistic ligand to RNF43 and ZNRF3, hence governing the number of limbs an embryo should form. The sequence is that of R-spondin-2 (rspo2) from Xenopus laevis (African clawed frog).